Reading from the N-terminus, the 193-residue chain is Ras-like protein 2 (193 aa).

Residue 12 to 19 coordinates GTP; it reads GGGGVGKS. The short motif at 34–42 is the Effector region element; the sequence is YDPTIEDSY. GTP is bound by residues 59 to 63 and 118 to 121; these read DTAGQ and NKCD. The residue at position 190 (C190) is a Cysteine methyl ester. C190 carries the S-geranylgeranyl cysteine lipid modification. Residues 191–193 constitute a propeptide, removed in mature form; sequence KLL.

Belongs to the small GTPase superfamily. Ras family.

The protein localises to the cell membrane. It carries out the reaction GTP + H2O = GDP + phosphate + H(+). Its function is as follows. Ras proteins bind GDP/GTP and possess intrinsic GTPase activity. The sequence is that of Ras-like protein 2 (RAS-2) from Physarum polycephalum (Slime mold).